Reading from the N-terminus, the 98-residue chain is Cytochrome c2 (98 aa).

Glutamine 1 carries the post-translational modification Pyrrolidone carboxylic acid. The heme c site is built by cysteine 10, cysteine 13, histidine 14, and methionine 76.

The protein belongs to the cytochrome c family. Binds 1 heme c group covalently per subunit.

The protein localises to the periplasm. Cytochrome c2 is found mainly in purple, non-sulfur, photosynthetic bacteria where it functions as the electron donor to the oxidized bacteriochlorophyll in the photophosphorylation pathway. However, it may also have a role in the respiratory chain and is found in some non-photosynthetic bacteria. The sequence is that of Cytochrome c2 from Rhodoplanes tepidamans (Rhodoplanes cryptolactis).